Consider the following 576-residue polypeptide: Arginine--tRNA ligase (576 aa).

The 'HIGH' region motif lies at 126–136; that stretch reads ANPTGPMHIGH.

It belongs to the class-I aminoacyl-tRNA synthetase family. Monomer.

It is found in the cytoplasm. The enzyme catalyses tRNA(Arg) + L-arginine + ATP = L-arginyl-tRNA(Arg) + AMP + diphosphate. The protein is Arginine--tRNA ligase of Rickettsia rickettsii (strain Iowa).